The primary structure comprises 436 residues: mRNA cap guanine-N(7) methyltransferase (436 aa).

The tract at residues Met-1–Leu-50 is disordered. One can recognise an mRNA cap 0 methyltransferase domain in the interval Ser-141 to Val-424. MRNA is bound at residue Asn-150–Asn-151. Residues Lys-154, Gly-172, Asp-194, Asp-223, Gln-249, and Tyr-254 each coordinate S-adenosyl-L-methionine.

Belongs to the class I-like SAM-binding methyltransferase superfamily. mRNA cap 0 methyltransferase family.

The protein localises to the nucleus. The catalysed reaction is a 5'-end (5'-triphosphoguanosine)-ribonucleoside in mRNA + S-adenosyl-L-methionine = a 5'-end (N(7)-methyl 5'-triphosphoguanosine)-ribonucleoside in mRNA + S-adenosyl-L-homocysteine. In terms of biological role, responsible for methylating the 5'-cap structure of mRNAs. In Saccharomyces cerevisiae (strain ATCC 204508 / S288c) (Baker's yeast), this protein is mRNA cap guanine-N(7) methyltransferase (ABD1).